The primary structure comprises 293 residues: DDRGK domain-containing protein 1 (293 aa).

The Lumenal segment spans residues 1-6; that stretch reads MWGPLI. Residues 7–27 form a helical membrane-spanning segment; the sequence is YALLGLAIVAAAFLFVRRSQA. At 28-293 the chain is on the cytoplasmic side; that stretch reads KEVVPVADDD…PADVDETTTA (266 aa). 2 disordered regions span residues 30 to 151 and 273 to 293; these read VVPV…RQKE and TDVE…TTTA. 2 stretches are compositionally biased toward basic and acidic residues: residues 90-126 and 133-151; these read KLQE…KERE and ERQR…RQKE.

It belongs to the DDRGK1 family.

It localises to the endoplasmic reticulum membrane. Substrate adapter for ufmylation, the covalent attachment of the ubiquitin-like modifier UFM1 to substrate proteins. The chain is DDRGK domain-containing protein 1 from Monosiga brevicollis (Choanoflagellate).